The chain runs to 120 residues: Large ribosomal subunit protein uL18 (120 aa).

This sequence belongs to the universal ribosomal protein uL18 family. As to quaternary structure, part of the 50S ribosomal subunit; part of the 5S rRNA/L5/L18/L25 subcomplex. Contacts the 5S and 23S rRNAs.

Its function is as follows. This is one of the proteins that bind and probably mediate the attachment of the 5S RNA into the large ribosomal subunit, where it forms part of the central protuberance. The protein is Large ribosomal subunit protein uL18 of Bacillus cytotoxicus (strain DSM 22905 / CIP 110041 / 391-98 / NVH 391-98).